The primary structure comprises 156 residues: Large ribosomal subunit protein uL22 (156 aa).

The protein belongs to the universal ribosomal protein uL22 family. As to quaternary structure, part of the 50S ribosomal subunit.

Functionally, this protein binds specifically to 23S rRNA. It makes multiple contacts with different domains of the 23S rRNA in the assembled 50S subunit and ribosome. Its function is as follows. The globular domain of the protein is located near the polypeptide exit tunnel on the outside of the subunit, while an extended beta-hairpin is found that lines the wall of the exit tunnel in the center of the 70S ribosome. The chain is Large ribosomal subunit protein uL22 from Halobacterium salinarum (strain ATCC 700922 / JCM 11081 / NRC-1) (Halobacterium halobium).